Here is a 99-residue protein sequence, read N- to C-terminus: MALTLTDVKRIAHLARLELADADAEHTLVQLNDFFGLVEQMQAVDTSGIAPLAHPIEQIEDVALRLRNDVVTETVEREAFQRPAPAVQDGLYLVPKVIE.

The protein belongs to the GatC family. In terms of assembly, heterotrimer of A, B and C subunits.

The enzyme catalyses L-glutamyl-tRNA(Gln) + L-glutamine + ATP + H2O = L-glutaminyl-tRNA(Gln) + L-glutamate + ADP + phosphate + H(+). The catalysed reaction is L-aspartyl-tRNA(Asn) + L-glutamine + ATP + H2O = L-asparaginyl-tRNA(Asn) + L-glutamate + ADP + phosphate + 2 H(+). Functionally, allows the formation of correctly charged Asn-tRNA(Asn) or Gln-tRNA(Gln) through the transamidation of misacylated Asp-tRNA(Asn) or Glu-tRNA(Gln) in organisms which lack either or both of asparaginyl-tRNA or glutaminyl-tRNA synthetases. The reaction takes place in the presence of glutamine and ATP through an activated phospho-Asp-tRNA(Asn) or phospho-Glu-tRNA(Gln). In Paraburkholderia phytofirmans (strain DSM 17436 / LMG 22146 / PsJN) (Burkholderia phytofirmans), this protein is Aspartyl/glutamyl-tRNA(Asn/Gln) amidotransferase subunit C.